Reading from the N-terminus, the 390-residue chain is Outer membrane protein assembly factor BamB (390 aa).

A signal peptide spans 1 to 25; sequence MPVLRDRIPRRGFFLGLALLAALSG. Cysteine 26 carries N-palmitoyl cysteine lipidation. Cysteine 26 is lipidated: S-diacylglycerol cysteine.

The protein belongs to the BamB family. In terms of assembly, part of the Bam complex.

Its subcellular location is the cell outer membrane. Part of the outer membrane protein assembly complex, which is involved in assembly and insertion of beta-barrel proteins into the outer membrane. In Marinobacter adhaerens (strain DSM 23420 / HP15), this protein is Outer membrane protein assembly factor BamB.